Here is a 1054-residue protein sequence, read N- to C-terminus: SMC5-SMC6 complex localization factor protein 1 (1054 aa).

BRCT domains are found at residues Glu2–Gly80 and Pro121–Lys199. Residues Arg283–Tyr303 are disordered. Residues His284–Ile299 are compositionally biased toward basic and acidic residues. The NSE5-like domain; mediates interaction with SLF2 stretch occupies residues Pro407 to Ser1054. ANK repeat units follow at residues Lys802 to Val832, Ala836 to Leu865, and Asp870 to Gln900.

Interacts (via BRCT domains) with RAD18 (via C-terminus and phosphorylated form); this interaction is required for efficient repair of UV-induced DNA damage. Interacts (via N-terminus) with SLF2; this interaction links RAD18 to the SMC5-SMC6 complex. Interacts (via BRCT domains) with RAD18; this interaction occurs in a SLF2-independent manner. Interacts with SMC6. As to expression, widely expressed. Expressed in testis. Expressed in spermatocytes.

The protein localises to the nucleus. The protein resides in the cytoplasm. Its subcellular location is the cytoskeleton. It is found in the microtubule organizing center. It localises to the centrosome. Functionally, plays a role in the DNA damage response (DDR) pathway by regulating postreplication repair of UV-damaged DNA and genomic stability maintenance. The SLF1-SLF2 complex acts to link RAD18 with the SMC5-SMC6 complex at replication-coupled interstrand cross-links (ICL) and DNA double-strand breaks (DSBs) sites on chromatin during DNA repair in response to stalled replication forks. Promotes the recruitment of SLF2 and the SMC5-SMC6 complex to DNA lesions. The protein is SMC5-SMC6 complex localization factor protein 1 of Mus musculus (Mouse).